Here is a 78-residue protein sequence, read N- to C-terminus: Probable [Fe-S]-dependent transcriptional repressor (78 aa).

Residues cysteine 56, cysteine 61, cysteine 64, and cysteine 70 each contribute to the iron-sulfur cluster site.

The protein belongs to the FeoC family.

In terms of biological role, may function as a transcriptional regulator that controls feoABC expression. The chain is Probable [Fe-S]-dependent transcriptional repressor from Escherichia coli O127:H6 (strain E2348/69 / EPEC).